The following is a 191-amino-acid chain: dCTP deaminase, dUMP-forming (191 aa).

DCTP-binding positions include 101-106 (KSSLGR), Asp-119, 127-129 (TLE), Gln-148, Tyr-162, and Gln-174. Residue Glu-129 is the Proton donor/acceptor of the active site.

The protein belongs to the dCTP deaminase family. In terms of assembly, homotrimer.

It catalyses the reaction dCTP + 2 H2O = dUMP + NH4(+) + diphosphate. The protein operates within pyrimidine metabolism; dUMP biosynthesis; dUMP from dCTP: step 1/1. In terms of biological role, bifunctional enzyme that catalyzes both the deamination of dCTP to dUTP and the hydrolysis of dUTP to dUMP without releasing the toxic dUTP intermediate. The sequence is that of dCTP deaminase, dUMP-forming from Streptomyces avermitilis (strain ATCC 31267 / DSM 46492 / JCM 5070 / NBRC 14893 / NCIMB 12804 / NRRL 8165 / MA-4680).